A 253-amino-acid polypeptide reads, in one-letter code: REF/SRPP-like protein Os05g0151300/LOC_Os05g05940 (253 aa).

Residues 1 to 26 are disordered; it reads MADSGSDAPISNRPEEEVTVEKTPEM. A compositionally biased stretch (basic and acidic residues) spans 13 to 26; that stretch reads RPEEEVTVEKTPEM.

The protein belongs to the REF/SRPP family.

The protein is REF/SRPP-like protein Os05g0151300/LOC_Os05g05940 of Oryza sativa subsp. japonica (Rice).